The sequence spans 425 residues: Exodeoxyribonuclease 7 large subunit (425 aa).

The protein belongs to the XseA family. Heterooligomer composed of large and small subunits.

It is found in the cytoplasm. The catalysed reaction is Exonucleolytic cleavage in either 5'- to 3'- or 3'- to 5'-direction to yield nucleoside 5'-phosphates.. Its function is as follows. Bidirectionally degrades single-stranded DNA into large acid-insoluble oligonucleotides, which are then degraded further into small acid-soluble oligonucleotides. The protein is Exodeoxyribonuclease 7 large subunit of Nocardia farcinica (strain IFM 10152).